Reading from the N-terminus, the 1288-residue chain is MPRKGTQPSTARRREEGPPPPSPDGASSDAEPEPPSGRTESPATAAETASEELDNRSLEEILNSIPPPPPPAMTNEAGAPRLMITHIVNQNFKSYAGEKILGPFHKRFSCIIGPNGSGKSNVIDSMLFVFGYRAQKIRSKKLSVLIHNSDEHKDIQSCTVEVHFQKIIDKEGDDYEVIPNSNFYVSRTACRDNTSVYHISGKKKTFKDVGNLLRSHGIDLDHNRFLILQGEVEQIAMMKPKGQTEHDEGMLEYLEDIIGCGRLNEPIKVLCRRVEILNEHRGEKLNRVKMVEKEKDALEGEKNIAIEFLTLENEIFRKKNHVCQYYIYELQKRIAEMETQKEKIHEDTKEINEKSNILSNEMKAKNKDVKDTEKKLNKITKFIEENKEKFTQLDLEDVQVREKLKHATSKAKKLEKQLQKDKEKVEEFKSIPAKSNNIINETTTRNNALEKEKEKEEKKLKEVMDSLKQETQGLQKEKESREKELMGFSKSVNEARSKMDVAQSELDIYLSRHNTAVSQLTKAKEALIAASETLKERKAAIRDIEGKLPQTEQELKEKEKELQKLTQEETNFKSLVHDLFQKVEEAKSSLAMNRSRGKVLDAIIQEKKSGRIPGIYGRLGDLGAIDEKYDVAISSCCHALDYIVVDSIDIAQECVNFLKRQNIGVATFIGLDKMAVWAKKMTEIQTPENTPRLFDLVKVKDEKIRQAFYFALRDTLVADNLDQATRVAYQKDRRWRVVTLQGQIIEQSGTMTGGGSKVMKGRMGSSLVIEISEEEVNKMESQLQNDSKKAMQIQEQKVQLEERVVKLRHSEREMRNTLEKFTASIQRLIEQEEYLNVQVKELEANVLATAPDKKKQKLLEENVSAFKTEYDAVAEKAGKVEAEVKRLHNTIVEINNHKLKAQQDKLDKINKQLDECASAITKAQVAIKTADRNLQKAQDSVLRTEKEIKDTEKEVDDLTAELKSLEDKAAEVVKNTNAAEESLPEIQKEHRNLLQELKVIQENEHALQKDALSIKLKLEQIDGHIAEHNSKIKYWHKEISKISLHPIEDNPIEEISVLSPEDLEAIKNPDSITNQIALLEARCHEMKPNLGAIAEYKKKEELYLQRVAELDKITYERDSFRQAYEDLRKQRLNEFMAGFYIITNKLKENYQMLTLGGDAELELVDSLDPFSEGIMFSVRPPKKSWKKIFNLSGGEKTLSSLALVFALHHYKPTPLYFMDEIDAALDFKNVSIVAFYIYEQTKNAQFIIISLRNNMFEISDRLIGIYKTYNITKSVAVNPKEIASKGLC.

The segment covering 1–10 (MPRKGTQPST) has biased composition (polar residues). The tract at residues 1–55 (MPRKGTQPSTARRREEGPPPPSPDGASSDAEPEPPSGRTESPATAAETASEELDN) is disordered. S22 and S28 each carry phosphoserine. Position 39 is a phosphothreonine (T39). Over residues 39–48 (TESPATAAET) the composition is skewed to low complexity. A phosphoserine mark is found at S41 and S50. 113-120 (GPNGSGKS) is a binding site for ATP. Position 143 is a phosphoserine (S143). The stretch at 272–588 (RRVEILNEHR…LFQKVEEAKS (317 aa)) forms a coiled coil. An N6-acetyllysine mark is found at K381 and K679. Residues 613–727 (PGIYGRLGDL…ADNLDQATRV (115 aa)) enclose the SMC hinge domain. Positions 767–1020 (LVIEISEEEV…ALSIKLKLEQ (254 aa)) form a coiled coil. Phosphoserine is present on residues S982 and S1056. A coiled-coil region spans residues 1109-1129 (ELDKITYERDSFRQAYEDLRK).

Belongs to the SMC family. SMC4 subfamily. Forms a heterodimer with SMC2. Component of the condensin complex, which contains the SMC2 and SMC4 heterodimer, and three non SMC subunits that probably regulate the complex: BRRN1/CAPH, CNAP1/CAPD2 and CAPG. In terms of tissue distribution, widely expressed. Higher expression in testis, colon, thymus.

It localises to the nucleus. The protein resides in the cytoplasm. Its subcellular location is the chromosome. In terms of biological role, central component of the condensin complex, a complex required for conversion of interphase chromatin into mitotic-like condense chromosomes. The condensin complex probably introduces positive supercoils into relaxed DNA in the presence of type I topoisomerases and converts nicked DNA into positive knotted forms in the presence of type II topoisomerases. In Homo sapiens (Human), this protein is Structural maintenance of chromosomes protein 4 (SMC4).